We begin with the raw amino-acid sequence, 314 residues long: 2,3-dihydroxyphenylpropionate/2,3-dihydroxicinnamic acid 1,2-dioxygenase (314 aa).

Residue His115 is the Proton donor of the active site. His179 acts as the Proton acceptor in catalysis.

This sequence belongs to the LigB/MhpB extradiol dioxygenase family. Homotetramer. Fe(2+) is required as a cofactor.

It catalyses the reaction 3-(2,3-dihydroxyphenyl)propanoate + O2 = (2Z,4E)-2-hydroxy-6-oxonona-2,4-dienedioate + H(+). The enzyme catalyses (2E)-3-(2,3-dihydroxyphenyl)prop-2-enoate + O2 = (2Z,4E,7E)-2-hydroxy-6-oxonona-2,4,7-trienedioate + H(+). Its pathway is aromatic compound metabolism; 3-phenylpropanoate degradation. Functionally, catalyzes the non-heme iron(II)-dependent oxidative cleavage of 2,3-dihydroxyphenylpropionic acid and 2,3-dihydroxicinnamic acid into 2-hydroxy-6-ketononadienedioate and 2-hydroxy-6-ketononatrienedioate, respectively. This is 2,3-dihydroxyphenylpropionate/2,3-dihydroxicinnamic acid 1,2-dioxygenase from Cupriavidus pinatubonensis (strain JMP 134 / LMG 1197) (Cupriavidus necator (strain JMP 134)).